The following is a 797-amino-acid chain: Plakophilin-3 (797 aa).

Residues 56 to 82 (QLGQQPRHNGAAEPEPEAETARGTSRG) form a disordered region. R81 carries the post-translational modification Omega-N-methylarginine. Residues S123, S180, and S183 each carry the phosphoserine modification. Residue Y195 is modified to Phosphotyrosine; by SRC. 2 positions are modified to phosphoserine: S238 and S240. The residue at position 250 (T250) is a Phosphothreonine. An Omega-N-methylarginine modification is found at R261. Positions 283 to 288 (SLSLSL) are required for interaction with SFN. A phosphoserine mark is found at S285, S313, S314, and S331. The required for interaction with GSK3B stretch occupies residues 294-724 (LPDVHGFNSY…AEVLVNIIAV (431 aa)). ARM repeat units lie at residues 305 to 348 (SHRT…HKCY), 351 to 390 (AAAK…NLIY), 393 to 432 (ADNK…NLSS), 449 to 487 (TDLV…NLSS), 491 to 536 (ATRQ…NLSY), 596 to 637 (PKGL…NITA), 645 to 684 (VLSR…NLSR), and 689 to 730 (KDEM…NLVV). The segment at 516–797 (AGKCEDKSVE…GYRKEDFLGP (282 aa)) is required for binding to PKP2 mRNA.

The protein belongs to the beta-catenin family. In terms of assembly, found in a complex composed of CDH1, RAP1A and PKP3; PKP3 acts as a scaffold protein within the complex, the complex is required for CDH1 localization to mature desmosome cell junctions. Interacts with FXR1; the interaction facilitates the binding of PKP3 to PKP2 mRNA. Interacts (via ARM repeats) with GSK3B; the interaction may be involved in PKP3 protein degradation. Interacts with hyperphosphorylated and hypophosphorylated RB1; the interaction inhibits RB1 interaction with and repression of the transcription factor E2F1, potentially via sequestering RB1 to the cytoplasm. Interacts with CDKN1A; the interaction sequesters CDKN1A to the cytoplasm thereby repressing its role as an inhibitor of CDK4- and CDK6-driven RB1 phosphorylation. Interacts (via N-terminus) with SFN; the interaction maintains the cytoplasmic pool of PKP3, facilitates PKP3 exchange at desmosomes and restricts PKP3 localization to existing desmosome cell junctions. Interacts (via N-terminus) with JUP; the interaction is required for PKP3 localization to desmosome cell-cell junctions. Phosphorylated at Ser-285 when localized to the cytoplasm, PKP3 at desmosome cell junctions is not phosphorylated. Phosphorylation at Try-195 by SRC is induced by reactive oxygen species and potentially acts as a release mechanism from desmosome cell-cell junctions. In terms of tissue distribution, expressed in the epidermis of the skin, in squamous non-cornifying epithelial cells in the vagina, single layer epithelia of the duodenum and pancreas acini and non-epithelial dendritic reticulum cells of lymph node follicles (at protein level). Expressed in the oral cavity mucosa, epidermis and small intestine epithelium (at protein level). As to expression, expressed in the oral cavity mucosa and epithelial cells of the crypts and villi in the small intestine (at protein level). Expressed in the epidermis with more abundant expression found in the basal and low spinous cells (at protein level).

The protein localises to the nucleus. Its subcellular location is the cell junction. It is found in the desmosome. It localises to the cytoplasm. The protein resides in the cell membrane. The protein localises to the adherens junction. Its function is as follows. A component of desmosome cell-cell junctions which are required for positive regulation of cellular adhesion. Required for the localization of DSG2, DSP and PKP2 to mature desmosome junctions. May also play a role in the maintenance of DSG3 protein abundance in keratinocytes. Required for the formation of DSP-containing desmosome precursors in the cytoplasm during desmosome assembly. Also regulates the accumulation of CDH1 to mature desmosome junctions, via cAMP-dependent signaling and its interaction with activated RAP1A. Positively regulates the stabilization of PKP2 mRNA and therefore protein abundance, via its interaction with FXR1, may also regulate the protein abundance of DSP via the same mechanism. May also regulate the protein abundance of the desmosome component PKP1. Required for the organization of desmosome junctions at intercellular borders between basal keratinocytes of the epidermis, as a result plays a role in maintenance of the dermal barrier and regulation of the dermal inflammatory response. Required during epidermal keratinocyte differentiation for cell adherence at tricellular cell-cell contacts, via regulation of the timely formation of adherens junctions and desmosomes in a calcium-dependent manner, and may also play a role in the organization of the intracellular actin fiber belt. Acts as a negative regulator of the inflammatory response in hematopoietic cells of the skin and intestine, via modulation of proinflammatory cytokine production. Important for epithelial barrier maintenance in the intestine to reduce intestinal permeability, thereby plays a role in protection from intestinal-derived endotoxemia. Required for the development of hair follicles, via a role in the regulation of inner root sheaf length, correct alignment and anterior-posterior polarity of hair follicles. Promotes proliferation and cell-cycle G1/S phase transition of keratinocytes. Promotes E2F1-driven transcription of G1/S phase promoting genes by acting to release E2F1 from its inhibitory interaction with RB1, via sequestering RB1 and CDKN1A to the cytoplasm and thereby increasing CDK4- and CDK6-driven phosphorylation of RB1. May act as a scaffold protein to facilitate MAPK phosphorylation of RPS6KA protein family members and subsequently promote downstream EGFR signaling. May play a role in the positive regulation of transcription of Wnt-mediated TCF-responsive target genes. This Homo sapiens (Human) protein is Plakophilin-3 (PKP3).